The chain runs to 180 residues: ATP-dependent protease subunit HslV (180 aa).

The active site involves Thr-5. Gly-165, Cys-168, and Thr-171 together coordinate Na(+).

It belongs to the peptidase T1B family. HslV subfamily. A double ring-shaped homohexamer of HslV is capped on each side by a ring-shaped HslU homohexamer. The assembly of the HslU/HslV complex is dependent on binding of ATP.

The protein localises to the cytoplasm. The enzyme catalyses ATP-dependent cleavage of peptide bonds with broad specificity.. Allosterically activated by HslU binding. Protease subunit of a proteasome-like degradation complex believed to be a general protein degrading machinery. The polypeptide is ATP-dependent protease subunit HslV (Helicobacter pylori (strain J99 / ATCC 700824) (Campylobacter pylori J99)).